The primary structure comprises 118 residues: Large ribosomal subunit protein uL18 (118 aa).

The segment covering 1 to 10 has biased composition (basic and acidic residues); the sequence is MKTTRRDATR. The tract at residues 1 to 20 is disordered; sequence MKTTRRDATRSRHQRVRRKV. Over residues 11-20 the composition is skewed to basic residues; sequence SRHQRVRRKV.

Belongs to the universal ribosomal protein uL18 family. In terms of assembly, part of the 50S ribosomal subunit; part of the 5S rRNA/L5/L18/L25 subcomplex. Contacts the 5S and 23S rRNAs.

In terms of biological role, this is one of the proteins that bind and probably mediate the attachment of the 5S RNA into the large ribosomal subunit, where it forms part of the central protuberance. In Acaryochloris marina (strain MBIC 11017), this protein is Large ribosomal subunit protein uL18.